The following is a 324-amino-acid chain: Antihemorrhagic factor cMSF (324 aa).

An N-terminal signal peptide occupies residues 1-19 (MHFLVALVLLGQIIGSTLS). Cystatin fetuin-A-type domains follow at residues 22–130 (VRGD…VKCH) and 141–254 (RNCL…SDCV). Positions 23 to 25 (RGD) match the Cell attachment site motif. 7 disulfide bridges follow: Cys-28–Cys-315, Cys-85–Cys-96, Cys-110–Cys-129, Cys-143–Cys-146, Cys-205–Cys-217, Cys-230–Cys-253, and Cys-287–Cys-291. Asn-204 carries an N-linked (GlcNAc...) asparagine glycan. A glycan (N-linked (GlcNAc...) asparagine) is linked at Asn-282.

Homodimer. Expressed by the liver.

It localises to the secreted. Functionally, suppress hemorrhage induced by metalloproteinases from the same venom (brevilysin-H3, -H4, -H6) and from habu venom (metalloproteinases HR1A and HR1B). The non-hemorrhagic brevilysin-L4 is not inhibited by cMSF. Does not inhibit serine and cysteine proteases such as trypsin, chymotrypsin, thermolysin, and papain. The inhibition may occur by formation of a non-covalent complex between this protein and the proteinases at their metalloproteinase domains. The sequence is that of Antihemorrhagic factor cMSF from Gloydius brevicauda (Korean slamosa snake).